Reading from the N-terminus, the 271-residue chain is Phycocyanobilin lyase subunit alpha (271 aa).

The protein belongs to the CpcE/RpcE/PecE family. As to quaternary structure, cpcE and CpcF associate to form a lyase.

Functionally, required for the chromophorylation of the cpcA1 gene product. The polypeptide is Phycocyanobilin lyase subunit alpha (cpcE1) (Pseudanabaena tenuis (strain PCC 7409)).